The primary structure comprises 606 residues: R-linalool synthase, chloroplastic (606 aa).

A chloroplast-targeting transit peptide spans methionine 1–serine 51. Residues arginine 326, aspartate 363, aspartate 367, arginine 504, and aspartate 507 each contribute to the (2E)-geranyl diphosphate site. Positions 363 and 367 each coordinate Mg(2+). Positions aspartate 363–aspartate 367 match the DDXXD motif motif. The Mg(2+) site is built by aspartate 507, threonine 511, and glutamate 515.

Belongs to the terpene synthase family. Tpsb subfamily. Requires Mg(2+) as cofactor. It depends on Mn(2+) as a cofactor.

The protein localises to the plastid. It is found in the chloroplast. The catalysed reaction is (2E)-geranyl diphosphate + H2O = (R)-linalool + diphosphate. It functions in the pathway secondary metabolite biosynthesis; terpenoid biosynthesis. Monoterpene synthase that catalyzes the formation of (3R)-linalool from geranyl diphosphate, but not from farnesyl diphosphate or geranylgeranyl diphosphate. The chain is R-linalool synthase, chloroplastic from Mentha aquatica (Water mint).